The chain runs to 354 residues: Serum paraoxonase/arylesterase 2 (354 aa).

Cysteine 42 and cysteine 352 are joined by a disulfide. Ca(2+) contacts are provided by glutamate 53 and aspartate 54. The active-site Proton acceptor is the histidine 114. Isoleucine 116, asparagine 167, aspartate 168, and asparagine 223 together coordinate Ca(2+). Asparagine 254 is a glycosylation site (N-linked (GlcNAc...) asparagine). Ca(2+) is bound by residues aspartate 268 and asparagine 269. Residues asparagine 269 and asparagine 323 are each glycosylated (N-linked (GlcNAc...) asparagine).

Belongs to the paraoxonase family. In terms of assembly, homotrimer. The cofactor is Ca(2+). Glycosylated. Post-translationally, the signal sequence is not cleaved.

The protein resides in the membrane. The catalysed reaction is a phenyl acetate + H2O = a phenol + acetate + H(+). The enzyme catalyses an N-acyl-L-homoserine lactone + H2O = an N-acyl-L-homoserine + H(+). Capable of hydrolyzing lactones and a number of aromatic carboxylic acid esters. The sequence is that of Serum paraoxonase/arylesterase 2 (PON2) from Bos taurus (Bovine).